The sequence spans 418 residues: Neurotensin receptor type 1 (418 aa).

The Extracellular segment spans residues 1–67 (MRLNSSAPGT…TDIYSKVLVT (67 aa)). Residues N4, N37, and N41 are each glycosylated (N-linked (GlcNAc...) asparagine). A helical membrane pass occupies residues 68 to 88 (AVYLALFVVGTVGNTVTAFTL). The Cytoplasmic segment spans residues 89–102 (ARKKSLQSLQSTVH). Residues 103 to 122 (YHLGSLALSDLLTLLLAMPV) form a helical membrane-spanning segment. Residues 123–142 (ELYNFIWVHHPWAFGDAGCR) are Extracellular-facing. A disulfide bond links C141 and C224. A helical transmembrane segment spans residues 143 to 164 (GYYFLRDACTYATALNVASLSV). Residues 165–184 (ERYLAICHPFKAKTLMSRSR) lie on the Cytoplasmic side of the membrane. The helical transmembrane segment at 185-205 (TKKFISAIWLASALLAVPMLF) threads the bilayer. The Extracellular segment spans residues 206-234 (TMGEQNRSADGQHAGGLVCTPTIHTATVK). Residues 235–259 (VVIQVNTFMSFIFPMVVISVLNTII) traverse the membrane as a helical segment. The Cytoplasmic portion of the chain corresponds to 260-303 (ANKLTVMVRQAAEQGQVCTVGGEHSTFSMAIEPGRVQALRHGVR). The chain crosses the membrane as a helical span at residues 304–325 (VLRAVVIAFVVCWLPYHVRRLM). A neurotensin binding region spans residues 321-344 (VRRLMFCYISDEQWTPFLYDFYHY). Topologically, residues 326–343 (FCYISDEQWTPFLYDFYH) are extracellular. The chain crosses the membrane as a helical span at residues 344 to 364 (YFYMVTNALFYVSSTINPILY). The Cytoplasmic segment spans residues 365–418 (NLVSANFRHIFLATLACLCPVWRRRRKRPAFSRKADSVSSNHTLSSNATRETLY). S-palmitoyl cysteine attachment occurs at residues C381 and C383.

It belongs to the G-protein coupled receptor 1 family. Neurotensin receptor subfamily. NTSR1 sub-subfamily. Interacts (palmitoylated form) with GNA11. In terms of processing, N-glycosylated. Palmitoylated; this is required for normal localization at membrane rafts and normal GNA11-mediated activation of down-stream signaling cascades. The palmitoylation level increases in response to neurotensin treatment. Expressed in prostate (at protein level). Detected in colon and peripheral blood mononuclear cells. Detected at very low levels in brain.

Its subcellular location is the cell membrane. It is found in the membrane raft. In terms of biological role, G-protein coupled receptor for the tridecapeptide neurotensin (NTS). Signaling is effected via G proteins that activate a phosphatidylinositol-calcium second messenger system. Signaling leads to the activation of downstream MAP kinases and protects cells against apoptosis. The protein is Neurotensin receptor type 1 (NTSR1) of Homo sapiens (Human).